The sequence spans 368 residues: Chaperone protein DnaJ (368 aa).

Residues 5 to 69 (DYYEVLGLSQ…QKRAQYDQFG (65 aa)) enclose the J domain. A CR-type zinc finger spans residues 130-212 (GKELNVEIPV…CHGSGKVRKR (83 aa)). Residues cysteine 143, cysteine 146, cysteine 160, cysteine 163, cysteine 186, cysteine 189, cysteine 200, and cysteine 203 each coordinate Zn(2+). CXXCXGXG motif repeat units follow at residues 143–150 (CDTCKGSG), 160–167 (CKHCSGSG), 186–193 (CGHCSGTG), and 200–207 (CTTCHGSG).

It belongs to the DnaJ family. In terms of assembly, homodimer. Zn(2+) is required as a cofactor.

It is found in the cytoplasm. Participates actively in the response to hyperosmotic and heat shock by preventing the aggregation of stress-denatured proteins and by disaggregating proteins, also in an autonomous, DnaK-independent fashion. Unfolded proteins bind initially to DnaJ; upon interaction with the DnaJ-bound protein, DnaK hydrolyzes its bound ATP, resulting in the formation of a stable complex. GrpE releases ADP from DnaK; ATP binding to DnaK triggers the release of the substrate protein, thus completing the reaction cycle. Several rounds of ATP-dependent interactions between DnaJ, DnaK and GrpE are required for fully efficient folding. Also involved, together with DnaK and GrpE, in the DNA replication of plasmids through activation of initiation proteins. This chain is Chaperone protein DnaJ, found in Bacillus mycoides (strain KBAB4) (Bacillus weihenstephanensis).